Reading from the N-terminus, the 419-residue chain is Histidine--tRNA ligase (419 aa).

This sequence belongs to the class-II aminoacyl-tRNA synthetase family. As to quaternary structure, homodimer.

It is found in the cytoplasm. It catalyses the reaction tRNA(His) + L-histidine + ATP = L-histidyl-tRNA(His) + AMP + diphosphate + H(+). The polypeptide is Histidine--tRNA ligase (Synechococcus sp. (strain JA-3-3Ab) (Cyanobacteria bacterium Yellowstone A-Prime)).